The chain runs to 357 residues: Protein BMRF2 (357 aa).

The Virion surface segment spans residues 1-11 (MFSCKQHLSLG). The hydrophobic stretch at 12 to 32 (ACVFCLGLLASTPFIWCFVFA) threads the membrane. Residues 33 to 46 (NLLSLEIFSPWQTH) are Virion surface-facing. Over 47–67 (VYRLGFPTACLMAVLWTLVPA) the chain traverses the membrane. Topologically, residues 68–70 (KHA) are virion surface. The hydrophobic stretch at 71–91 (VRAVTPAIMLNIASALIFFSL) threads the membrane. The Virion surface segment spans residues 92–98 (RVYSTST). A transmembrane span lies at residues 99-121 (WVSAPCLFLANLPLLCLWPRLAI). The Virion surface portion of the chain corresponds to 122-133 (EIVYICPAIHQR). The chain crosses the lipid bilayer at residues 134–154 (FFELGLLLACTIFALSVVSRA). At 155-158 (LEVS) the chain is on the virion surface side. At 159–179 (AVFMSPFFIFLALGSGSLAGA) the chain is embedded in the membrane. The Virion surface segment spans residues 180-217 (RRNQIYTSGLERRRSIFCARGDHSVASLKETLHKCPWD). Residues 199–201 (RGD) carry the Integrin binding site motif. Residues 218-238 (LLAISALTVLVVCVMIVLHVH) are membrane-embedded. Residues 239 to 240 (AE) lie on the Virion surface side of the membrane. A transmembrane helix spans residues 241-261 (VFFGLSRYLPLFLCGAMASGG). Residues 262-267 (LYLGHS) lie on the Virion surface side of the membrane. The chain crosses the lipid bilayer at residues 268 to 288 (SIIACVMATLCTLTSVVVYFL). The Virion surface segment spans residues 289 to 298 (HETLGPLGKT). The hydrophobic stretch at 299–319 (VLFISIFVYYFSGVAALSAAM) threads the membrane. The Virion surface portion of the chain corresponds to 320–335 (RYKLKKFVNGPLVHLR). The chain crosses the lipid bilayer at residues 336-356 (VVYMCCFVFTFCEYLLVTFIK). S357 is a topological domain (virion surface).

Belongs to the herpesviridae BMRF2 family. As to quaternary structure, interacts with BDLF2. Interacts with host beta1 integrin family. Extensively glycosylated by O-linked oligosaccharides.

Its subcellular location is the virion membrane. It localises to the host cell membrane. Facilitates virus attachment to oral epithelial cells by binding to host beta1 integrin family. Participates in rearrangement of cellular actin to increase intercellular contacts by binding BDLF2 and thereby promote virus cell-to-cell spreading. In Homo sapiens (Human), this protein is Protein BMRF2.